Consider the following 96-residue polypeptide: MYILITYDVSTETEAGKKRLRKVAQVCKDFGQRVQKSVFECSVNEAQFEQLKHRLLQCIDEKSDSLRIYRLREPAKKYIQEYGVNLTIDFDAPLVL.

Asp-8 provides a ligand contact to Mg(2+).

The protein belongs to the CRISPR-associated endoribonuclease Cas2 protein family. Homodimer, forms a heterotetramer with a Cas1 homodimer. The cofactor is Mg(2+).

Functionally, CRISPR (clustered regularly interspaced short palindromic repeat), is an adaptive immune system that provides protection against mobile genetic elements (viruses, transposable elements and conjugative plasmids). CRISPR clusters contain sequences complementary to antecedent mobile elements and target invading nucleic acids. CRISPR clusters are transcribed and processed into CRISPR RNA (crRNA). Functions as a ssRNA-specific endoribonuclease. Involved in the integration of spacer DNA into the CRISPR cassette. The sequence is that of CRISPR-associated endoribonuclease Cas2 1 from Moorella thermoacetica (strain ATCC 39073 / JCM 9320).